Here is a 236-residue protein sequence, read N- to C-terminus: Purine nucleoside phosphorylase DeoD-type (236 aa).

Residue His-4 coordinates a purine D-ribonucleoside. Residues Gly-20, Arg-24, Arg-43, and 87–90 (RVGT) contribute to the phosphate site. A purine D-ribonucleoside contacts are provided by residues 179–181 (EME) and 203–204 (SD). Residue Asp-204 is the Proton donor of the active site.

Belongs to the PNP/UDP phosphorylase family. Homohexamer; trimer of homodimers.

The catalysed reaction is a purine D-ribonucleoside + phosphate = a purine nucleobase + alpha-D-ribose 1-phosphate. It carries out the reaction a purine 2'-deoxy-D-ribonucleoside + phosphate = a purine nucleobase + 2-deoxy-alpha-D-ribose 1-phosphate. Catalyzes the reversible phosphorolytic breakdown of the N-glycosidic bond in the beta-(deoxy)ribonucleoside molecules, with the formation of the corresponding free purine bases and pentose-1-phosphate. This chain is Purine nucleoside phosphorylase DeoD-type, found in Streptococcus thermophilus (strain ATCC BAA-491 / LMD-9).